The primary structure comprises 350 residues: 3-dehydroquinate synthase (350 aa).

Residues 63–68, 97–101, 121–122, K134, K143, and 161–164 each bind NAD(+); these read DGEEYK, GVIGD, TT, and FLKT. Positions 176, 235, and 252 each coordinate Zn(2+).

This sequence belongs to the sugar phosphate cyclases superfamily. Dehydroquinate synthase family. Requires Co(2+) as cofactor. The cofactor is Zn(2+). NAD(+) serves as cofactor.

It is found in the cytoplasm. The enzyme catalyses 7-phospho-2-dehydro-3-deoxy-D-arabino-heptonate = 3-dehydroquinate + phosphate. It participates in metabolic intermediate biosynthesis; chorismate biosynthesis; chorismate from D-erythrose 4-phosphate and phosphoenolpyruvate: step 2/7. Its function is as follows. Catalyzes the conversion of 3-deoxy-D-arabino-heptulosonate 7-phosphate (DAHP) to dehydroquinate (DHQ). The sequence is that of 3-dehydroquinate synthase from Sulfurovum sp. (strain NBC37-1).